Here is a 239-residue protein sequence, read N- to C-terminus: tRNA (guanine-N(7)-)-methyltransferase (239 aa).

The S-adenosyl-L-methionine site is built by Glu-69, Glu-94, Asp-121, and Asp-144. Residue Asp-144 is part of the active site. Lys-148 lines the substrate pocket. The interaction with RNA stretch occupies residues 150–155; the sequence is RHNKRR. Substrate contacts are provided by residues Asp-180 and 217–220; that span reads TKFE.

The protein belongs to the class I-like SAM-binding methyltransferase superfamily. TrmB family. Monomer.

It carries out the reaction guanosine(46) in tRNA + S-adenosyl-L-methionine = N(7)-methylguanosine(46) in tRNA + S-adenosyl-L-homocysteine. Its pathway is tRNA modification; N(7)-methylguanine-tRNA biosynthesis. Its function is as follows. Catalyzes the formation of N(7)-methylguanine at position 46 (m7G46) in tRNA. The chain is tRNA (guanine-N(7)-)-methyltransferase from Salmonella paratyphi A (strain ATCC 9150 / SARB42).